The primary structure comprises 86 residues: MPKSEIHPKWYPDAKVICNGEVVMTTGSTQPELHVDVWSGNHPFFTGTQKILDTEGRVDRFMKKYGMGSANSSESKDQKEEKDSKK.

The disordered stretch occupies residues 64–86; the sequence is KYGMGSANSSESKDQKEEKDSKK. The span at 74-86 shows a compositional bias: basic and acidic residues; that stretch reads ESKDQKEEKDSKK.

This sequence belongs to the bacterial ribosomal protein bL31 family. Type A subfamily. As to quaternary structure, part of the 50S ribosomal subunit.

Binds the 23S rRNA. The polypeptide is Large ribosomal subunit protein bL31 (Prochlorococcus marinus (strain MIT 9301)).